A 199-amino-acid polypeptide reads, in one-letter code: Pyridoxal 5'-phosphate synthase subunit PdxT (199 aa).

51 to 53 lines the L-glutamine pocket; that stretch reads GES. Cysteine 83 acts as the Nucleophile in catalysis. L-glutamine is bound by residues arginine 110 and 137-138; that span reads IR. Active-site charge relay system residues include histidine 172 and glutamate 174.

The protein belongs to the glutaminase PdxT/SNO family. In terms of assembly, in the presence of PdxS, forms a dodecamer of heterodimers. Only shows activity in the heterodimer.

It carries out the reaction aldehydo-D-ribose 5-phosphate + D-glyceraldehyde 3-phosphate + L-glutamine = pyridoxal 5'-phosphate + L-glutamate + phosphate + 3 H2O + H(+). It catalyses the reaction L-glutamine + H2O = L-glutamate + NH4(+). It participates in cofactor biosynthesis; pyridoxal 5'-phosphate biosynthesis. Functionally, catalyzes the hydrolysis of glutamine to glutamate and ammonia as part of the biosynthesis of pyridoxal 5'-phosphate. The resulting ammonia molecule is channeled to the active site of PdxS. The chain is Pyridoxal 5'-phosphate synthase subunit PdxT from Thermoplasma volcanium (strain ATCC 51530 / DSM 4299 / JCM 9571 / NBRC 15438 / GSS1).